A 529-amino-acid polypeptide reads, in one-letter code: Bifunctional purine biosynthesis protein PurH (529 aa).

In terms of domain architecture, MGS-like spans 1–148 (MQQHRPVRRA…KNHKDVAIVV (148 aa)).

It belongs to the PurH family.

The catalysed reaction is (6R)-10-formyltetrahydrofolate + 5-amino-1-(5-phospho-beta-D-ribosyl)imidazole-4-carboxamide = 5-formamido-1-(5-phospho-D-ribosyl)imidazole-4-carboxamide + (6S)-5,6,7,8-tetrahydrofolate. The enzyme catalyses IMP + H2O = 5-formamido-1-(5-phospho-D-ribosyl)imidazole-4-carboxamide. It functions in the pathway purine metabolism; IMP biosynthesis via de novo pathway; 5-formamido-1-(5-phospho-D-ribosyl)imidazole-4-carboxamide from 5-amino-1-(5-phospho-D-ribosyl)imidazole-4-carboxamide (10-formyl THF route): step 1/1. It participates in purine metabolism; IMP biosynthesis via de novo pathway; IMP from 5-formamido-1-(5-phospho-D-ribosyl)imidazole-4-carboxamide: step 1/1. The protein is Bifunctional purine biosynthesis protein PurH of Erwinia tasmaniensis (strain DSM 17950 / CFBP 7177 / CIP 109463 / NCPPB 4357 / Et1/99).